The chain runs to 274 residues: Octanoyltransferase LipM (274 aa).

The 213-residue stretch at 32 to 244 (GEVPPTLRFY…GFARALGLTL (213 aa)) folds into the BPL/LPL catalytic domain. Cysteine 146 serves as the catalytic Acyl-thioester intermediate.

It belongs to the octanoyltransferase LipM family. As to quaternary structure, monomer.

It catalyses the reaction octanoyl-[ACP] + L-lysyl-[protein] = N(6)-octanoyl-L-lysyl-[protein] + holo-[ACP] + H(+). The protein operates within protein modification; protein lipoylation via endogenous pathway; protein N(6)-(lipoyl)lysine from octanoyl-[acyl-carrier-protein]. Functionally, catalyzes the transfer of endogenously produced octanoic acid from octanoyl-acyl-carrier-protein onto the lipoyl domain of GcvH, an intermediate carrier during protein lipoylation. This chain is Octanoyltransferase LipM, found in Symbiobacterium thermophilum (strain DSM 24528 / JCM 14929 / IAM 14863 / T).